The following is a 396-amino-acid chain: Putative carbamoyltransferase YgeW (396 aa).

Residues 71-74 (STRT), Q98, 165-168 (HPTQ), and 330-331 (CL) contribute to the carbamoyl phosphate site.

It belongs to the aspartate/ornithine carbamoyltransferase superfamily. As to quaternary structure, homotrimer.

In Escherichia coli O6:H1 (strain CFT073 / ATCC 700928 / UPEC), this protein is Putative carbamoyltransferase YgeW (ygeW).